A 157-amino-acid chain; its full sequence is Endoribonuclease YbeY (157 aa).

3 residues coordinate Zn(2+): H116, H120, and H126.

The protein belongs to the endoribonuclease YbeY family. It depends on Zn(2+) as a cofactor.

The protein resides in the cytoplasm. In terms of biological role, single strand-specific metallo-endoribonuclease involved in late-stage 70S ribosome quality control and in maturation of the 3' terminus of the 16S rRNA. The protein is Endoribonuclease YbeY of Renibacterium salmoninarum (strain ATCC 33209 / DSM 20767 / JCM 11484 / NBRC 15589 / NCIMB 2235).